The sequence spans 373 residues: Anhydro-N-acetylmuramic acid kinase (373 aa).

12–19 (GTSLDGVD) is an ATP binding site.

The protein belongs to the anhydro-N-acetylmuramic acid kinase family.

It carries out the reaction 1,6-anhydro-N-acetyl-beta-muramate + ATP + H2O = N-acetyl-D-muramate 6-phosphate + ADP + H(+). Its pathway is amino-sugar metabolism; 1,6-anhydro-N-acetylmuramate degradation. It participates in cell wall biogenesis; peptidoglycan recycling. Its function is as follows. Catalyzes the specific phosphorylation of 1,6-anhydro-N-acetylmuramic acid (anhMurNAc) with the simultaneous cleavage of the 1,6-anhydro ring, generating MurNAc-6-P. Is required for the utilization of anhMurNAc either imported from the medium or derived from its own cell wall murein, and thus plays a role in cell wall recycling. The chain is Anhydro-N-acetylmuramic acid kinase from Salmonella dublin (strain CT_02021853).